A 1228-amino-acid polypeptide reads, in one-letter code: MALPRPVQYGKVQRMSYGKVKEVLDLPYLLEIQKKSFQWFLDEGLREVLREISPIKDYSETLLLEFVDYYFDGPPKYSEQECKERDATYARPLKVKVRLINKETGEIKEQDIYMGEFPIMTETGTFIINGAERVIVSQLIRSPGCYFASSIDKQGRKIFSGTLIPNRGAWLEFETDASELLSVRLDRTRKVSLTTLLKAFGLYNQQLIFEKFGEDERLKASLEKEANKGELGNPVENALLEVYRRLRPGEPPNVENARNLLYSMFFDPRRYDLAKVGRYKFNKKLSLWKRIFNKRAAQDVVDPKTGEILVKEGELITREIATQIQDAGVNEVWVYADEERPFKVVGNNTVKLDRYVEFDVSDINIKELVYRPVLDDILNTTNDVLEIKRLIKERERELVPYCLTIDDIFAATSYFLGLKYGIGTTDDIDHLGNRRVRAVGELLQNQFRIGLARMERVIRERMNIHDIDTVTPQTLINIRPVTAAIKEFFGSSPLSQFMDQVNPLAALTNKRRLSALGPGGLSRDRAGFEVRDVHHSHYGRMCPIETPEGPNIGLITSLATYARVNEYGFLETPYRKVDKKEARVTNEVVYLTADEEDTYKIAQATEPVDEEGRFINQRVTVRFGEEIIEVDKHEVDLIDISPKQIVSVSTSLIPFLENDDANRALMGSNMQRQAVPLLMTESPIIGTGVEYRAAVDSGVCILAKKDGVVENVSADEIVIRNNDGTKDVYHLLKFKRTNQGTCFNQRPIVRKGQEVKAGEVIADGPSTDHGELALGKNVLVAFMPWEGYNYEDAILISERLVKEDVYTSIHIEEYECEARDTKLGPEEITRDIPNVGEDAIKDLDERGIIRIGAEVKSGDILVGKVTPKGETELTAEERLLRAIFGEKARETRDTSLRVPHGEGGIVVDVKVFSRDKGDELPPGVNQLVRVYVAQKRKISVGDKMAGRHGNKGVISRILPVEDMPFLPDGTPVDIVLNPLGVPSRMNIGQILETHLGYAAKALGWKVATPVFDGAKEEDIEEALKLAGLNPTGKTILYDGRTGEPFDNEVTVGYMYMLKLVHLVDDKIHARSTGPYSLVTQQPLGGKAQFGGQRFGEMEVWALEAYGAAYTLQELLTVKSDDVTGRVKTYEAIVKGENIPEPGIPESFKVLVKELQSLCLDVKLLSEDNKEIELKESVDEDEQPQGLGAFEIGGDEIEEDKEDDKEKFYEDLMNATQEDDQGEIDDIDE.

Positions 1175–1204 are disordered; sequence ESVDEDEQPQGLGAFEIGGDEIEEDKEDDK. Over residues 1192 to 1202 the composition is skewed to acidic residues; the sequence is GGDEIEEDKED.

The protein belongs to the RNA polymerase beta chain family. The RNAP catalytic core consists of 2 alpha, 1 beta, 1 beta' and 1 omega subunit. When a sigma factor is associated with the core the holoenzyme is formed, which can initiate transcription.

It catalyses the reaction RNA(n) + a ribonucleoside 5'-triphosphate = RNA(n+1) + diphosphate. Functionally, DNA-dependent RNA polymerase catalyzes the transcription of DNA into RNA using the four ribonucleoside triphosphates as substrates. The sequence is that of DNA-directed RNA polymerase subunit beta from Caldicellulosiruptor bescii (strain ATCC BAA-1888 / DSM 6725 / KCTC 15123 / Z-1320) (Anaerocellum thermophilum).